A 484-amino-acid polypeptide reads, in one-letter code: Muscarinic acetylcholine receptor M4 (484 aa).

At methionine 1 to glutamate 32 the chain is on the extracellular side. Asparagine 3, asparagine 8, and asparagine 14 each carry an N-linked (GlcNAc...) asparagine glycan. The helical transmembrane segment at methionine 33–methionine 55 threads the bilayer. Residues leucine 56–asparagine 69 lie on the Cytoplasmic side of the membrane. A helical membrane pass occupies residues tyrosine 70 to tyrosine 90. Residues serine 91–aspartate 107 are Extracellular-facing. Cysteine 106 and cysteine 186 are disulfide-bonded. Residues leucine 108–leucine 129 traverse the membrane as a helical segment. Residues glutamate 130 to methionine 149 lie on the Cytoplasmic side of the membrane. The helical transmembrane segment at alanine 150–tryptophan 172 threads the bilayer. Topologically, residues glutamine 173–proline 194 are extracellular. A helical transmembrane segment spans residues alanine 195 to isoleucine 217. Residues histidine 218 to threonine 406 are Cytoplasmic-facing. Residues asparagine 255 to serine 316 are disordered. A compositionally biased stretch (basic and acidic residues) spans aspartate 260–asparagine 270. The chain crosses the membrane as a helical span at residues isoleucine 407–isoleucine 427. Topologically, residues asparagine 428–tyrosine 441 are extracellular. A helical transmembrane segment spans residues isoleucine 442–cysteine 461. The Cytoplasmic portion of the chain corresponds to asparagine 462–arginine 484.

Belongs to the G-protein coupled receptor 1 family. Muscarinic acetylcholine receptor subfamily. CHRM4 sub-subfamily.

The protein resides in the cell membrane. It is found in the postsynaptic cell membrane. Functionally, the muscarinic acetylcholine receptor mediates various cellular responses, including inhibition of adenylate cyclase, breakdown of phosphoinositides and modulation of potassium channels through the action of G proteins. Primary transducing effect is inhibition of adenylate cyclase. In Xenopus laevis (African clawed frog), this protein is Muscarinic acetylcholine receptor M4 (chrm4).